Reading from the N-terminus, the 586-residue chain is Maltogenic alpha-amylase (586 aa).

Ca(2+) is bound by residues asparagine 147, asparagine 152, aspartate 153, glycine 172, and aspartate 174. Residues histidine 247 and arginine 326 each contribute to the substrate site. Residue aspartate 328 is the Nucleophile of the active site. Glutamate 357 functions as the Proton donor in the catalytic mechanism. Substrate is bound by residues 423 to 424 (HD), aspartate 468, and arginine 472.

Belongs to the glycosyl hydrolase 13 family. Ca(2+) serves as cofactor.

The catalysed reaction is hydrolysis of (1-&gt;4)-alpha-D-glucosidic linkages in polysaccharides so as to remove successive alpha-maltose residues from the non-reducing ends of the chains.. In terms of biological role, converts starch into maltose. The chain is Maltogenic alpha-amylase from Bacillus acidopullulyticus.